The primary structure comprises 314 residues: Porphobilinogen deaminase (314 aa).

An S-(dipyrrolylmethanemethyl)cysteine modification is found at Cys-234.

The protein belongs to the HMBS family. As to quaternary structure, monomer. Requires dipyrromethane as cofactor.

The catalysed reaction is 4 porphobilinogen + H2O = hydroxymethylbilane + 4 NH4(+). It functions in the pathway porphyrin-containing compound metabolism; protoporphyrin-IX biosynthesis; coproporphyrinogen-III from 5-aminolevulinate: step 2/4. Tetrapolymerization of the monopyrrole PBG into the hydroxymethylbilane pre-uroporphyrinogen in several discrete steps. The protein is Porphobilinogen deaminase of Mycobacterium marinum (strain ATCC BAA-535 / M).